We begin with the raw amino-acid sequence, 319 residues long: Homoserine kinase (319 aa).

100 to 110 (PLSSGMGSSAS) lines the ATP pocket.

This sequence belongs to the GHMP kinase family. Homoserine kinase subfamily.

Its subcellular location is the cytoplasm. It catalyses the reaction L-homoserine + ATP = O-phospho-L-homoserine + ADP + H(+). It functions in the pathway amino-acid biosynthesis; L-threonine biosynthesis; L-threonine from L-aspartate: step 4/5. In terms of biological role, catalyzes the ATP-dependent phosphorylation of L-homoserine to L-homoserine phosphate. This is Homoserine kinase from Chloroherpeton thalassium (strain ATCC 35110 / GB-78).